A 193-amino-acid polypeptide reads, in one-letter code: Anthranilate synthase component 2 (193 aa).

Positions 3–193 constitute a Glutamine amidotransferase type-1 domain; the sequence is NILFLDNFDS…QQSIEWLLNR (191 aa). Position 57-59 (57-59) interacts with L-glutamine; that stretch reads GPG. Cys84 acts as the Nucleophile; for GATase activity in catalysis. Residues Gln88 and 134–135 contribute to the L-glutamine site; that span reads SL. Residues His170 and Glu172 each act as for GATase activity in the active site.

In terms of assembly, heterotetramer consisting of two non-identical subunits: a beta subunit (TrpG) and a large alpha subunit (TrpE).

The enzyme catalyses chorismate + L-glutamine = anthranilate + pyruvate + L-glutamate + H(+). It functions in the pathway amino-acid biosynthesis; L-tryptophan biosynthesis; L-tryptophan from chorismate: step 1/5. Functionally, part of a heterotetrameric complex that catalyzes the two-step biosynthesis of anthranilate, an intermediate in the biosynthesis of L-tryptophan. In the first step, the glutamine-binding beta subunit (TrpG) of anthranilate synthase (AS) provides the glutamine amidotransferase activity which generates ammonia as a substrate that, along with chorismate, is used in the second step, catalyzed by the large alpha subunit of AS (TrpE) to produce anthranilate. In the absence of TrpG, TrpE can synthesize anthranilate directly from chorismate and high concentrations of ammonia. The protein is Anthranilate synthase component 2 (trpG) of Haemophilus influenzae (strain ATCC 51907 / DSM 11121 / KW20 / Rd).